Reading from the N-terminus, the 729-residue chain is Glycine--tRNA ligase, mitochondrial 1 (729 aa).

Met1 is subject to N-acetylmethionine. Residues 1-28 constitute a mitochondrion transit peptide; it reads MRIFSTFVFHRRQQIFNLRQFQTTTILR. The region spanning 50–106 is the WHEP-TRS domain; that stretch reads SLSEKSSSVEAQGNAVRALKASRAAKPEIDAAIEQLNKLKLEKSTVEKELQSIISSS. Position 296 (Glu296) interacts with glycine. ATP is bound by residues 328-330 and 339-340; these read RNE and RV. Glu347 contacts glycine. 454-455 is a binding site for ATP; the sequence is EC. 575–577 is a binding site for glycine; it reads EPS. Arg582 provides a ligand contact to ATP.

It belongs to the class-II aminoacyl-tRNA synthetase family. As to quaternary structure, homodimer.

The protein localises to the mitochondrion. It localises to the cytoplasm. Its subcellular location is the cytosol. It catalyses the reaction tRNA(Gly) + glycine + ATP = glycyl-tRNA(Gly) + AMP + diphosphate. The enzyme catalyses 2 ATP + H(+) = P(1),P(4)-bis(5'-adenosyl) tetraphosphate + diphosphate. Its function is as follows. Catalyzes the ATP-dependent ligation of glycine to the 3'-end of its cognate tRNA, via the formation of an aminoacyl-adenylate intermediate (Gly-AMP). Also produces diadenosine tetraphosphate (Ap4A), a universal pleiotropic signaling molecule needed for cell regulation pathways, by direct condensation of 2 ATPs. Thereby, may play a special role in Ap4A homeostasis. This chain is Glycine--tRNA ligase, mitochondrial 1, found in Arabidopsis thaliana (Mouse-ear cress).